The sequence spans 459 residues: Transcription factor AP-2-beta (459 aa).

Lysine 21 participates in a covalent cross-link: Glycyl lysine isopeptide (Lys-Gly) (interchain with G-Cter in SUMO). Positions 30–139 are disordered; it reads HDGVPSHSSR…PQLSGLDPRR (110 aa). Residues 35 to 51 are compositionally biased toward polar residues; the sequence is SHSSRLSQLGSVSQGPY. A compositionally biased stretch (low complexity) spans 121-132; it reads LLPQPRAALPQL. Serine 258 carries the phosphoserine; by PKA modification. Positions 299 to 429 are H-S-H (helix-span-helix), dimerization; sequence RRKAANVTLL…YLTEALKGMD (131 aa). The interval 435–459 is disordered; that stretch reads NTTNRHTSGEGPGSKTGDKEEKHRK. The span at 450–459 shows a compositional bias: basic and acidic residues; the sequence is TGDKEEKHRK.

The protein belongs to the AP-2 family. Binds DNA as a dimer. Can form homodimers or heterodimers with other AP-2 family members. Interacts with CITED4. Interacts with UBE2I. Interacts with KCTD1; this interaction represses transcription activation. Interacts with CITED2 (via C-terminus); the interaction stimulates TFAP2B-transcriptional activity. Post-translationally, sumoylated. Sumoylated on Lys-21; which inhibits transcriptional activity. As to expression, localizes to neurons in areas of the cerebral cortex, cerebellum and hypothalamus (at protein level).

The protein resides in the nucleus. Its function is as follows. Sequence-specific DNA-binding protein that interacts with inducible viral and cellular enhancer elements to regulate transcription of selected genes. AP-2 factors bind to the consensus sequence 5'-GCCNNNGGC-3' and activate genes involved in a large spectrum of important biological functions including proper eye, face, body wall, limb and neural tube development. They also suppress a number of genes including MCAM/MUC18, C/EBP alpha and MYC. AP-2-beta appears to be required for normal face and limb development and for proper terminal differentiation and function of renal tubular epithelia. The sequence is that of Transcription factor AP-2-beta (Tfap2b) from Mus musculus (Mouse).